The sequence spans 755 residues: Elongation factor G, mitochondrial (755 aa).

The transit peptide at 1–38 (MFKRVGLIAGIAGPVAGSSRFSAVSFSKRAFSASSKRC) directs the protein to the mitochondrion. A tr-type G domain is found at 63–344 (KKLRNIGISA…AIVEYLPNPS (282 aa)). Residues 72 to 79 (AHIDSGKT), 143 to 147 (DTPGH), and 197 to 200 (NKMD) each bind GTP.

This sequence belongs to the TRAFAC class translation factor GTPase superfamily. Classic translation factor GTPase family. EF-G/EF-2 subfamily.

Its subcellular location is the mitochondrion. It functions in the pathway protein biosynthesis; polypeptide chain elongation. Functionally, mitochondrial GTPase that catalyzes the GTP-dependent ribosomal translocation step during translation elongation. During this step, the ribosome changes from the pre-translocational (PRE) to the post-translocational (POST) state as the newly formed A-site-bound peptidyl-tRNA and P-site-bound deacylated tRNA move to the P and E sites, respectively. Catalyzes the coordinated movement of the two tRNA molecules, the mRNA and conformational changes in the ribosome. The chain is Elongation factor G, mitochondrial from Kluyveromyces lactis (strain ATCC 8585 / CBS 2359 / DSM 70799 / NBRC 1267 / NRRL Y-1140 / WM37) (Yeast).